We begin with the raw amino-acid sequence, 482 residues long: Lipoamide acyltransferase component of branched-chain alpha-keto acid dehydrogenase complex, mitochondrial (482 aa).

Residues 1–61 constitute a mitochondrion transit peptide; that stretch reads MAAARVLRTW…HSLRTAAVLQ (61 aa). Positions 64-139 constitute a Lipoyl-binding domain; that stretch reads VVQFKLSDIG…YVGKPLIDIE (76 aa). An N6-lipoyllysine modification is found at Lys105. Residue Lys133 is modified to N6-succinyllysine. Positions 145-160 are critical for association with PPM1K; that stretch reads DSEEDVVETPAVSHDE. A Peripheral subunit-binding (PSBD) domain is found at 172–209; that stretch reads LATPAVRRLAMENNIKLSEVVGSGKDGRILKEDILSFL. Lys196 carries the post-translational modification N6-acetyllysine; alternate. Lys196 carries the post-translational modification N6-succinyllysine; alternate. At Lys202 the chain carries N6-acetyllysine. Residues 217–252 are disordered; that stretch reads LPPSPKSEITPPPPQPKDRTFPTPIAKPPVFTGKDR. Pro residues predominate over residues 218-231; it reads PPSPKSEITPPPPQ. A Phosphoserine modification is found at Ser220. N6-acetyllysine is present on residues Lys243 and Lys250. N6-succinyllysine is present on Lys261. Residue Lys289 is modified to N6-acetyllysine; alternate. Lys289 is subject to N6-succinyllysine; alternate. Residue Arg291 coordinates CoA. 2 positions are modified to N6-acetyllysine: Lys295 and Lys304. Residues Ser306, Asp349, Gln378, Ser399, Asn400, Ser403, Gly424, and Ile426 each coordinate CoA. Lys435 bears the N6-acetyllysine mark. Lys440 carries the post-translational modification N6-acetyllysine; alternate. Lys440 bears the N6-succinyllysine; alternate mark. Catalysis depends on residues His452 and Asp456.

It belongs to the 2-oxoacid dehydrogenase family. Forms a 24-polypeptide structural core with octahedral symmetry that represents the E2 component of the branched-chain alpha-ketoacid dehydrogenase (BCKDH) complex. The BCKDH complex is composed of three major building blocks E1, E2 and E3. It is organized around E2, a 24-meric cubic core composed of DBT, to which are associated 6 to 12 copies of E1, and approximately 6 copies of the dehydrogenase E3, a DLD dimer. Interacts with PPM1K with a 24:1 stoichiometry; the N-terminal region (residues 49-61) of PPM1K and C-terminal linker of the lipoyl domain of DBT/E2 (residues 145-160) are critical for this interaction whereas the lipoyl prosthetic group is dispensable. This interaction requires colocalization in mitochondria. PPM1K competes with BCKDK for binding to DBT; this interaction is modulated by branched-chain alpha-keto acids (BCKAs). At steady state, BCKDH holoenzyme preferentially binds BCKDK and BCKDHA is phosphorylated. In response to high levels of BCKAs, BCKDK is replaced by PPM1K leading to BCKDHA dephosphorylation. (R)-lipoate serves as cofactor.

The protein resides in the mitochondrion matrix. The enzyme catalyses N(6)-[(R)-dihydrolipoyl]-L-lysyl-[protein] + 2-methylpropanoyl-CoA = N(6)-[(R)-S(8)-2-methylpropanoyldihydrolipoyl]-L-lysyl-[protein] + CoA. Its function is as follows. The branched-chain alpha-keto dehydrogenase complex catalyzes the overall conversion of alpha-keto acids to acyl-CoA and CO(2). It contains multiple copies of three enzymatic components: branched-chain alpha-keto acid decarboxylase (E1), lipoamide acyltransferase (E2) and lipoamide dehydrogenase (E3). Within this complex, the catalytic function of this enzyme is to accept, and to transfer to coenzyme A, acyl groups that are generated by the branched-chain alpha-keto acid decarboxylase component. This chain is Lipoamide acyltransferase component of branched-chain alpha-keto acid dehydrogenase complex, mitochondrial (Dbt), found in Mus musculus (Mouse).